A 517-amino-acid chain; its full sequence is ATP synthase subunit beta (517 aa).

Residue G167–T174 participates in ATP binding. 2 stretches are compositionally biased toward basic and acidic residues: residues A475–D484 and D495–D508. A disordered region spans residues A475–A517.

It belongs to the ATPase alpha/beta chains family. F-type ATPases have 2 components, CF(1) - the catalytic core - and CF(0) - the membrane proton channel. CF(1) has five subunits: alpha(3), beta(3), gamma(1), delta(1), epsilon(1). CF(0) has three main subunits: a(1), b(2) and c(9-12). The alpha and beta chains form an alternating ring which encloses part of the gamma chain. CF(1) is attached to CF(0) by a central stalk formed by the gamma and epsilon chains, while a peripheral stalk is formed by the delta and b chains.

It localises to the cell membrane. The catalysed reaction is ATP + H2O + 4 H(+)(in) = ADP + phosphate + 5 H(+)(out). Produces ATP from ADP in the presence of a proton gradient across the membrane. The catalytic sites are hosted primarily by the beta subunits. In Mycobacterium sp. (strain JLS), this protein is ATP synthase subunit beta.